The following is a 254-amino-acid chain: Type III pantothenate kinase (254 aa).

Residue 6–13 (DVGNTNTT) participates in ATP binding. Substrate-binding positions include Y100 and 107 to 110 (GADR). The active-site Proton acceptor is D109. D129 contacts K(+). T132 contacts ATP. T184 provides a ligand contact to substrate.

The protein belongs to the type III pantothenate kinase family. Homodimer. The cofactor is NH4(+). It depends on K(+) as a cofactor.

It is found in the cytoplasm. The catalysed reaction is (R)-pantothenate + ATP = (R)-4'-phosphopantothenate + ADP + H(+). It functions in the pathway cofactor biosynthesis; coenzyme A biosynthesis; CoA from (R)-pantothenate: step 1/5. Functionally, catalyzes the phosphorylation of pantothenate (Pan), the first step in CoA biosynthesis. In Anaeromyxobacter dehalogenans (strain 2CP-1 / ATCC BAA-258), this protein is Type III pantothenate kinase.